A 108-amino-acid polypeptide reads, in one-letter code: Glutaredoxin 4 (108 aa).

A Glutaredoxin domain is found at 5–107 (IKKIQNQIQN…KTISICDKLN (103 aa)). Lysine 22 is a binding site for glutathione. Cysteine 30 contacts [2Fe-2S] cluster. Glutathione contacts are provided by residues arginine 59, phenylalanine 71, and 84–85 (CN).

This sequence belongs to the glutaredoxin family. Monothiol subfamily. As to quaternary structure, homodimer.

It is found in the cytoplasm. In terms of biological role, monothiol glutaredoxin involved in the biogenesis of iron-sulfur clusters. This chain is Glutaredoxin 4 (grxD), found in Buchnera aphidicola subsp. Baizongia pistaciae (strain Bp).